A 662-amino-acid polypeptide reads, in one-letter code: tRNA 5-methylaminomethyl-2-thiouridine biosynthesis bifunctional protein MnmC (662 aa).

Residues 1 to 245 are tRNA (mnm(5)s(2)U34)-methyltransferase; that stretch reads MKQNAIQPAN…KREMLTGEMA (245 aa). An FAD-dependent cmnm(5)s(2)U34 oxidoreductase region spans residues 270-662; it reads IGGGIASALL…RKLLKGKAVK (393 aa).

In the N-terminal section; belongs to the methyltransferase superfamily. tRNA (mnm(5)s(2)U34)-methyltransferase family. The protein in the C-terminal section; belongs to the DAO family. Requires FAD as cofactor.

Its subcellular location is the cytoplasm. The enzyme catalyses 5-aminomethyl-2-thiouridine(34) in tRNA + S-adenosyl-L-methionine = 5-methylaminomethyl-2-thiouridine(34) in tRNA + S-adenosyl-L-homocysteine + H(+). In terms of biological role, catalyzes the last two steps in the biosynthesis of 5-methylaminomethyl-2-thiouridine (mnm(5)s(2)U) at the wobble position (U34) in tRNA. Catalyzes the FAD-dependent demodification of cmnm(5)s(2)U34 to nm(5)s(2)U34, followed by the transfer of a methyl group from S-adenosyl-L-methionine to nm(5)s(2)U34, to form mnm(5)s(2)U34. In Klebsiella pneumoniae subsp. pneumoniae (strain ATCC 700721 / MGH 78578), this protein is tRNA 5-methylaminomethyl-2-thiouridine biosynthesis bifunctional protein MnmC.